Here is a 232-residue protein sequence, read N- to C-terminus: Large ribosomal subunit protein uL1 (232 aa).

This sequence belongs to the universal ribosomal protein uL1 family. In terms of assembly, part of the 50S ribosomal subunit.

Its function is as follows. Binds directly to 23S rRNA. The L1 stalk is quite mobile in the ribosome, and is involved in E site tRNA release. In terms of biological role, protein L1 is also a translational repressor protein, it controls the translation of the L11 operon by binding to its mRNA. This chain is Large ribosomal subunit protein uL1, found in Sinorhizobium medicae (strain WSM419) (Ensifer medicae).